Reading from the N-terminus, the 168-residue chain is G/U mismatch-specific DNA glycosylase (168 aa).

Belongs to the uracil-DNA glycosylase (UDG) superfamily. TDG/mug family. In terms of assembly, binds DNA as a monomer.

It localises to the cytoplasm. It carries out the reaction Specifically hydrolyzes mismatched double-stranded DNA and polynucleotides, releasing free uracil.. Excises ethenocytosine and uracil, which can arise by alkylation or deamination of cytosine, respectively, from the corresponding mispairs with guanine in ds-DNA. It is capable of hydrolyzing the carbon-nitrogen bond between the sugar-phosphate backbone of the DNA and the mispaired base. The complementary strand guanine functions in substrate recognition. Required for DNA damage lesion repair in stationary-phase cells. In Citrobacter koseri (strain ATCC BAA-895 / CDC 4225-83 / SGSC4696), this protein is G/U mismatch-specific DNA glycosylase.